Consider the following 676-residue polypeptide: Lutropin-choriogonadotropic hormone receptor (676 aa).

The N-terminal stretch at 1 to 29 is a signal peptide; sequence MKQPLLALQLLKLLLLLLLPLPPLPRALR. Topologically, residues 30 to 340 are extracellular; sequence EARCCPEPCN…EDIMGYDFLR (311 aa). Residue Asn103 is glycosylated (N-linked (GlcNAc...) asparagine). LRR repeat units lie at residues 126–151, 153–175, 176–200, 201–224, and 225–248; these read LPRLKYLSICNTGIRKFPDVTKIFSS, TNFILEICDNLHITTIPGNAFQG, MNNESITLKLYGNGFEEVQSHAFNG, TTVISLVLKENVHLERIHNGAFRG, and ATGPSILDISSTKLQALPSHGLES. Asn178 and Asn199 each carry an N-linked (GlcNAc...) asparagine glycan. At Tyr308 the chain carries Sulfotyrosine. The chain crosses the membrane as a helical span at residues 341–362; the sequence is VLIWLINILAIMGNMTVLFVLL. Residues 363–372 lie on the Cytoplasmic side of the membrane; it reads TSRYKLTVPR. The helical transmembrane segment at 373–393 threads the bilayer; the sequence is FLMCNLSFADFCMGLYLLLIA. Topologically, residues 394-416 are extracellular; that stretch reads SVDSQTKGQYYNHAIDWQTGSGC. A disulfide bridge links Cys416 with Cys491. Residues 417 to 439 form a helical membrane-spanning segment; it reads NTAGFFTVFASELSVYTLTVITL. Over 440–459 the chain is Cytoplasmic; that stretch reads ERWHTITYAIHLDQKLRLRH. A helical transmembrane segment spans residues 460-482; it reads AILIMLGGWLFSSLIAMLPLVGV. Residues 483–502 are Extracellular-facing; it reads SNYMKVSICFPMDVETTLSQ. The chain crosses the membrane as a helical span at residues 503 to 526; the sequence is IYILTILILNVVAFIIICACYIKI. Residues 527 to 547 are Cytoplasmic-facing; the sequence is YFAVRNPELMATNKDTKIAKK. A helical membrane pass occupies residues 548-571; it reads MAILIFTDFTCMAPISFFAISAAF. Residues 572-582 lie on the Extracellular side of the membrane; it reads KMPLITVTNSK. A helical membrane pass occupies residues 583–604; it reads VLLVLFYPINSCANPFLYAIFT. Topologically, residues 605–676 are cytoplasmic; it reads KTFRRDFFLL…LLDKTCYKEY (72 aa). Residues Cys620 and Cys621 are each lipidated (S-palmitoyl cysteine).

It belongs to the G-protein coupled receptor 1 family. FSH/LSH/TSH subfamily. Sulfated.

The protein localises to the cell membrane. Its function is as follows. Receptor for lutropin-choriogonadotropic hormone. The activity of this receptor is mediated by G proteins which activate adenylate cyclase. This Callithrix jacchus (White-tufted-ear marmoset) protein is Lutropin-choriogonadotropic hormone receptor (LHCGR).